The following is a 714-amino-acid chain: Fatty acid oxidation complex subunit alpha (714 aa).

Residues methionine 1 to proline 190 form an enoyl-CoA hydratase region. The tract at residues alanine 306–glutamine 714 is 3-hydroxyacyl-CoA dehydrogenase.

It in the N-terminal section; belongs to the enoyl-CoA hydratase/isomerase family. This sequence in the central section; belongs to the 3-hydroxyacyl-CoA dehydrogenase family. In terms of assembly, heterotetramer of two alpha chains (FadJ) and two beta chains (FadI).

Its subcellular location is the cytoplasm. The enzyme catalyses a (3S)-3-hydroxyacyl-CoA = a (2E)-enoyl-CoA + H2O. It catalyses the reaction a 4-saturated-(3S)-3-hydroxyacyl-CoA = a (3E)-enoyl-CoA + H2O. The catalysed reaction is a (3S)-3-hydroxyacyl-CoA + NAD(+) = a 3-oxoacyl-CoA + NADH + H(+). It carries out the reaction (3S)-3-hydroxybutanoyl-CoA = (3R)-3-hydroxybutanoyl-CoA. Its pathway is lipid metabolism; fatty acid beta-oxidation. Catalyzes the formation of a hydroxyacyl-CoA by addition of water on enoyl-CoA. Also exhibits 3-hydroxyacyl-CoA epimerase and 3-hydroxyacyl-CoA dehydrogenase activities. The polypeptide is Fatty acid oxidation complex subunit alpha (Escherichia coli O139:H28 (strain E24377A / ETEC)).